A 62-amino-acid polypeptide reads, in one-letter code: U-stichotoxin-Hau1a (62 aa).

Residues 1–21 form the signal peptide; it reads MKPAIFLMLFVAMFLISEGEG. Positions 22 to 31 are excised as a propeptide; sequence FKPKDAPQER. The residue at position 36 (Pro-36) is a Hydroxyproline. 2 cysteine pairs are disulfide-bonded: Cys-41/Cys-53 and Cys-44/Cys-59.

Belongs to the Hau1a/HC18/HC19 family.

It localises to the secreted. It is found in the nematocyst. In terms of biological role, toxin that is lethal to crab. Does not produce the typical symptoms associated with sodium channel toxins in crabs, suggesting that it likely does not act on sodium channels. This chain is U-stichotoxin-Hau1a, found in Heteractis aurora (Banded sea anemone).